We begin with the raw amino-acid sequence, 246 residues long: Aquaporin AqpM (246 aa).

Residues 1–11 (MVSLTKRCIAE) lie on the Cytoplasmic side of the membrane. Residues 12 to 32 (FIGTFFLVFFGAGAAAITLMI) form a helical membrane-spanning segment. Residues 33–45 (ASGGTAPNPFNIG) are Extracellular-facing. The helical transmembrane segment at 46-66 (IGLLGGLGDWVAIGLAFGFAI) threads the bilayer. Over 67–69 (AAS) the chain is Cytoplasmic. The chain crosses the membrane as a helical span at residues 70–90 (IYALGNISGCHINPAVTIGLW). Residues 82 to 84 (NPA) carry the NPA 1 motif. Over 91-103 (SVKKFPGRDVVPY) the chain is Extracellular. A helical transmembrane segment spans residues 104 to 124 (IIAQLLGAAFASFIFLQCAGI). The Cytoplasmic segment spans residues 125-145 (TAATIGGLGATAPFPGIGYWQ). A helical transmembrane segment spans residues 146–166 (AMLAETVGTFLLMITIMGIAV). The Extracellular portion of the chain corresponds to 167-172 (DERAPK). The chain crosses the membrane as a helical span at residues 173-193 (GFAGIIIGLTVAGIITTIGNI). Over 194-217 (TGSSLNPARTFGPYLNDMVFAGTN) the chain is Cytoplasmic. The NPA 2 signature appears at 199–201 (NPA). A helical transmembrane segment spans residues 218-238 (LWNYFPIYVIGPVVGAVLAAL). At 239 to 246 (TYQYLTSE) the chain is on the extracellular side.

Belongs to the MIP/aquaporin (TC 1.A.8) family. As to quaternary structure, homotetramer.

It is found in the cell membrane. Channel that permits osmotically driven movement of water in both directions. It mediates rapid entry or exit of water in response to abrupt changes in osmolarity. Also exhibits a transient but reproducible increase in the initial glycerol flux. The protein is Aquaporin AqpM (aqpM) of Methanothermobacter thermautotrophicus (strain ATCC 29096 / DSM 1053 / JCM 10044 / NBRC 100330 / Delta H) (Methanobacterium thermoautotrophicum).